The sequence spans 354 residues: Putative [LysW]-L-2-aminoadipate/[LysW]-L-glutamate phosphate reductase (354 aa).

Residues 10–13 (SGVI) and 34–36 (SRR) each bind NADP(+). The active site involves C153. N321 is a binding site for NADP(+).

It belongs to the NAGSA dehydrogenase family. Type 1 subfamily. LysY sub-subfamily.

The protein localises to the cytoplasm. It catalyses the reaction [amino-group carrier protein]-C-terminal-N-(1-carboxy-5-oxopentan-1-yl)-L-glutamine + phosphate + NADP(+) = [amino-group carrier protein]-C-terminal-N-(1-carboxy-5-phosphooxy-5-oxopentan-1-yl)-L-glutamine + NADPH + H(+). The catalysed reaction is [amino-group carrier protein]-C-terminal-gamma-(L-glutamyl-5-semialdehyde)-L-glutamate + phosphate + NADP(+) = [amino-group carrier protein]-C-terminal-gamma-(5-phospho-L-glutamyl)-L-glutamate + NADPH + H(+). The protein operates within amino-acid biosynthesis; L-lysine biosynthesis via AAA pathway; L-lysine from L-alpha-aminoadipate (Thermus route): step 3/5. It participates in amino-acid biosynthesis; L-arginine biosynthesis. Involved in both the arginine and lysine biosynthetic pathways. This Caldivirga maquilingensis (strain ATCC 700844 / DSM 13496 / JCM 10307 / IC-167) protein is Putative [LysW]-L-2-aminoadipate/[LysW]-L-glutamate phosphate reductase.